The chain runs to 703 residues: Collagen alpha-2(VIII) chain (703 aa).

An N-terminal signal peptide occupies residues 1-28 (MLGTLTPLSSLLLLLLVLVLGCGPRASS). The segment at 29–76 (GGGAGGAAGYAPVKYIQPMQKGPVGPPFREGKGQYLEMPLPLLPMDLK) is nonhelical region (NC2). The segment at 70–544 (LLPMDLKGEP…AFDETGIAGL (475 aa)) is disordered. Residues 77–536 (GEPGPPGKPG…PGPPGAPGAF (460 aa)) form a triple-helical region region. Over residues 79–97 (PGPPGKPGPRGPPGPPGFP) the composition is skewed to pro residues. The segment covering 166 to 192 (PSGITIPGKPGAQGVPGPPGFQGEPGP) has biased composition (low complexity). The segment covering 206–224 (GDNGVGQPGLPGAPGQGGA) has biased composition (gly residues). Composition is skewed to low complexity over residues 265–275 (EPGAVGPKGPP) and 285–297 (AAGLPGPQGPSGA). The span at 433-442 (GRPGGPGVAG) shows a compositional bias: gly residues. Low complexity-rich tracts occupy residues 444–462 (LGQKGDLGLPGQPGLRGPS) and 476–486 (PQGLPGLKGEP). Pro residues predominate over residues 506–532 (TGPPGVPGSPGITGPPGPPGPPGPPGA). The interval 537–703 (DETGIAGLHL…SFSGFLLCPT (167 aa)) is nonhelical region (NC1). The region spanning 570–703 (SAHATPAFTA…SFSGFLLCPT (134 aa)) is the C1q domain.

As to quaternary structure, homotrimers, or heterotrimers in association with alpha 2(VIII) type collagens. Four homotrimers can form a tetrahedron stabilized by central interacting C-terminal NC1 trimers. Proteolytically cleaved by neutrophil elastase, in vitro. In terms of processing, prolines at the third position of the tripeptide repeating unit (G-X-Y) are hydroxylated in some or all of the chains. In terms of tissue distribution, expressed primarily in the subendothelium of large blood vessels. Also expressed in arterioles and venules in muscle, heart, kidney, spleen, umbilical cord, liver and lung and is also found in connective tissue layers around hair follicles, around nerve bundles in muscle, in the dura of the optic nerve, in cornea and sclera, and in the perichondrium of cartilaginous tissues. In the kidney, expressed in mesangial cells, glomerular endothelial cells, and tubular epithelial cells. Also expressed in mast cells, and in astrocytes during the repair process. Expressed in Descemet's membrane.

It localises to the secreted. It is found in the extracellular space. The protein localises to the extracellular matrix. The protein resides in the basement membrane. In terms of biological role, macromolecular component of the subendothelium. Major component of the Descemet's membrane (basement membrane) of corneal endothelial cells. Also a component of the endothelia of blood vessels. Necessary for migration and proliferation of vascular smooth muscle cells and thus, has a potential role in the maintenance of vessel wall integrity and structure, in particular in atherogenesis. The protein is Collagen alpha-2(VIII) chain (COL8A2) of Homo sapiens (Human).